The sequence spans 502 residues: Glutamate--tRNA ligase (502 aa).

The short motif at 9–19 (PSPTGFPHVGT) is the 'HIGH' region element. Positions 250–254 (KLSKR) match the 'KMSKS' region motif. Residue lysine 253 participates in ATP binding.

It belongs to the class-I aminoacyl-tRNA synthetase family. Glutamate--tRNA ligase type 1 subfamily. Monomer.

Its subcellular location is the cytoplasm. The enzyme catalyses tRNA(Glu) + L-glutamate + ATP = L-glutamyl-tRNA(Glu) + AMP + diphosphate. In terms of biological role, catalyzes the attachment of glutamate to tRNA(Glu) in a two-step reaction: glutamate is first activated by ATP to form Glu-AMP and then transferred to the acceptor end of tRNA(Glu). This Acinetobacter baumannii (strain SDF) protein is Glutamate--tRNA ligase.